A 1185-amino-acid chain; its full sequence is 205 kDa microtubule-associated protein (1185 aa).

A compositionally biased stretch (low complexity) spans 146 to 159 (EPNQLPEQLQQQQQ). Positions 146–196 (EPNQLPEQLQQQQQIESQGVHEDPRQEDEDEHSSVATTYGTSSLSENNSSP) are disordered. Residues 179 to 196 (SVATTYGTSSLSENNSSP) are compositionally biased toward polar residues. Phosphoserine occurs at positions 354 and 448. Y450 bears the Phosphotyrosine mark. Phosphoserine is present on residues S709, S710, and S712. T721 is subject to Phosphothreonine. Residue S728 is modified to Phosphoserine. The microtubule-binding stretch occupies residues 745 to 977 (TAADGQSISQ…ASTKVRPAAT (233 aa)). Positions 856-866 (SIATKTSTTSS) are enriched in low complexity. 2 disordered regions span residues 856–1035 (SIAT…TSTA) and 1054–1114 (SASL…SSPA). Polar residues-rich tracts occupy residues 867–881 (LTGNPRKSLSSNVGS) and 908–936 (TITNKPTASGTASDNVTRTTLRPLVSTNA). S874 carries the phosphoserine modification. Residues 940-952 (ATSGTGSVASSTA) are compositionally biased toward low complexity. The segment covering 989-999 (PRSTISSTTTV) has biased composition (polar residues). The segment covering 1003-1015 (PSTSTPSFSTRSP) has biased composition (low complexity). 2 stretches are compositionally biased toward polar residues: residues 1016-1026 (NKQQSNGLGKN) and 1054-1066 (SASLTYNNGSTSR). S1075 and S1086 each carry phosphoserine. The segment covering 1100 to 1111 (LTPQSKDGTAKS) has biased composition (polar residues). S1121 bears the Phosphoserine mark.

Its subcellular location is the cytoplasm. The protein localises to the cytoskeleton. It is found in the spindle. In terms of biological role, may play an important role in the regulation of microtubule assembly and interaction. The chain is 205 kDa microtubule-associated protein (Map205) from Drosophila melanogaster (Fruit fly).